Consider the following 727-residue polypeptide: LIM domain-binding protein 3 (727 aa).

A PDZ domain is found at 1–84; it reads MSYSVTLTGP…NLSLTLQKSK (84 aa). 3 positions are modified to phosphoserine: Ser44, Ser121, and Ser123. Residues 86-197 are disordered; sequence PIPISTTAPP…GSSQPRQYNN (112 aa). A compositionally biased stretch (low complexity) spans 140–156; sequence PTFSPAFSRPSAFSSLA. Positions 188-197 are enriched in polar residues; the sequence is GSSQPRQYNN. The residue at position 217 (Ser217) is a Phosphoserine. Residue Arg219 is modified to Omega-N-methylarginine. Ser223 carries the post-translational modification Phosphoserine. Disordered stretches follow at residues 284-440 and 472-529; these read TEFM…YTPS and APSV…PQVP. Residues 312–385 are compositionally biased toward low complexity; sequence ATTPLLPASA…SAPATHTSYS (74 aa). The span at 428–440 shows a compositional bias: pro residues; it reads PYTPSPAPAYTPS. Positions 494-513 are enriched in polar residues; it reads DSFSQKFAPGKSTTSISKQT. Omega-N-methylarginine occurs at positions 516 and 533. 3 consecutive LIM zinc-binding domains span residues 549–607, 608–667, and 668–727; these read PLCG…QFFA, PLCA…LFST, and KCHG…TINL.

As to quaternary structure, interacts via its LIM domains with various PKC isoforms. Interacts via its PDZ domain with the ACTN2 C-terminal region. Interacts with MYOZ1, MYOZ2 and MYOZ3. As to expression, expressed primarily in skeletal muscle and to a lesser extent in heart. Also detected in brain and placenta.

Its subcellular location is the cytoplasm. The protein resides in the perinuclear region. The protein localises to the cell projection. It localises to the pseudopodium. It is found in the cytoskeleton. Its subcellular location is the myofibril. The protein resides in the sarcomere. The protein localises to the z line. May function as an adapter in striated muscle to couple protein kinase C-mediated signaling via its LIM domains to the cytoskeleton. This chain is LIM domain-binding protein 3, found in Homo sapiens (Human).